The following is a 276-amino-acid chain: Radial spoke head protein 9 homolog (276 aa).

The protein belongs to the flagellar radial spoke RSP9 family. As to quaternary structure, component of the axonemal radial spoke 1 (RS1) and 2 (RS2) complexes, at least composed of spoke head proteins RSPH1, RSPH3, RSPH9 and the cilia-specific component RSPH4A or sperm-specific component RSPH6A, spoke stalk proteins RSPH14, DNAJB13, DYDC1, ROPN1L and NME5, and the RS1 complex-specific anchor protein IQUB. Interacts with IQUB. Interacts with RSPH3B. Interacts with RSPH4A. Interacts with RSPH6A. Interacts with CFAP61. Interacts with LRRC23.

It is found in the cytoplasm. Its subcellular location is the cytoskeleton. The protein resides in the cilium axoneme. The protein localises to the flagellum axoneme. It localises to the cell projection. It is found in the kinocilium. In terms of biological role, functions as part of axonemal radial spoke complexes that play an important part in the motility of sperm and cilia. Essential for both the radial spoke head assembly and the central pair microtubule stability in ependymal motile cilia. Required for motility of olfactory and neural cilia and for the structural integrity of ciliary axonemes in both 9+0 and 9+2 motile cilia. This chain is Radial spoke head protein 9 homolog (RSPH9), found in Homo sapiens (Human).